A 91-amino-acid polypeptide reads, in one-letter code: Sec-independent protein translocase protein TatA (91 aa).

A helical transmembrane segment spans residues 2 to 22; that stretch reads ANLGFPELVLIAVVILVLFGW. Residues 43 to 55 are compositionally biased toward basic and acidic residues; it reads VSEMKNDGAEAEK. The disordered stretch occupies residues 43–91; it reads VSEMKNDGAEAEKTSAASTKTDEITSVSSTDTPQPTVTVESKDEKKHPA. The span at 57-81 shows a compositional bias: polar residues; that stretch reads SAASTKTDEITSVSSTDTPQPTVTV. Residues 82–91 are compositionally biased toward basic and acidic residues; the sequence is ESKDEKKHPA.

Belongs to the TatA/E family. As to quaternary structure, the Tat system comprises two distinct complexes: a TatABC complex, containing multiple copies of TatA, TatB and TatC subunits, and a separate TatA complex, containing only TatA subunits. Substrates initially bind to the TatABC complex, which probably triggers association of the separate TatA complex to form the active translocon.

The protein localises to the cell membrane. In terms of biological role, part of the twin-arginine translocation (Tat) system that transports large folded proteins containing a characteristic twin-arginine motif in their signal peptide across membranes. TatA could form the protein-conducting channel of the Tat system. The sequence is that of Sec-independent protein translocase protein TatA from Corynebacterium kroppenstedtii (strain DSM 44385 / JCM 11950 / CIP 105744 / CCUG 35717).